Consider the following 846-residue polypeptide: Selenocysteine insertion sequence-binding protein 2 (846 aa).

Composition is skewed to basic and acidic residues over residues 151-165 (RRAW…RRAD) and 206-215 (PEFEFSRLDF). Disordered regions lie at residues 151–246 (RRAW…SNMS), 266–288 (TDHT…TREL), 321–440 (TTSS…VPVQ), 448–467 (AALE…RPVV), and 475–613 (VLSK…DSAT). Residue Ser-220 is modified to Phosphoserine. Composition is skewed to polar residues over residues 220-232 (SPKN…TQKQ), 272-288 (AVTN…TREL), and 321-342 (TTSS…SDPS). The Nuclear localization signal signature appears at 370-380 (KKNKKKKEKSK). Positions 417–428 (KLQSKQQAQNDF) are enriched in polar residues. A compositionally biased stretch (basic and acidic residues) spans 527–536 (ILKERQERMQ). Over residues 542–551 (SAVSPTVASD) the composition is skewed to polar residues. The tract at residues 666-687 (LVLGLREVLKHLKLRKLKCIII) is RNA-binding. The disordered stretch occupies residues 774–804 (RQEQAGEPGPQTPPSPPMQDPIQSTDEGTLA). Residues 783–792 (PQTPPSPPMQ) show a composition bias toward pro residues.

Ubiquitous.

The protein resides in the cytoplasm. Its subcellular location is the nucleus. Its function is as follows. mRNA-binding protein that binds to the SECIS (selenocysteine insertion sequence) element present in the 3'-UTR of mRNAs encoding selenoproteins and facilitates the incorporation of the rare amino acid selenocysteine. Insertion of selenocysteine at UGA codons is mediated by SECISBP2 and EEFSEC: SECISBP2 (1) specifically binds the SECIS sequence once the 80S ribosome encounters an in-frame UGA codon and (2) contacts the RPS27A/eS31 of the 40S ribosome before ribosome stalling. (3) GTP-bound EEFSEC then delivers selenocysteinyl-tRNA(Sec) to the 80S ribosome and adopts a preaccommodated state conformation. (4) After GTP hydrolysis, EEFSEC dissociates from the assembly, selenocysteinyl-tRNA(Sec) accommodates, and peptide bond synthesis and selenoprotein elongation occur. The polypeptide is Selenocysteine insertion sequence-binding protein 2 (Secisbp2) (Rattus norvegicus (Rat)).